Consider the following 130-residue polypeptide: Phosphoribosyl-AMP cyclohydrolase (130 aa).

Aspartate 77 lines the Mg(2+) pocket. Residue cysteine 78 coordinates Zn(2+). Residues aspartate 79 and aspartate 81 each contribute to the Mg(2+) site. The Zn(2+) site is built by cysteine 95 and cysteine 102.

Belongs to the PRA-CH family. As to quaternary structure, homodimer. It depends on Mg(2+) as a cofactor. The cofactor is Zn(2+).

The protein resides in the cytoplasm. It carries out the reaction 1-(5-phospho-beta-D-ribosyl)-5'-AMP + H2O = 1-(5-phospho-beta-D-ribosyl)-5-[(5-phospho-beta-D-ribosylamino)methylideneamino]imidazole-4-carboxamide. It participates in amino-acid biosynthesis; L-histidine biosynthesis; L-histidine from 5-phospho-alpha-D-ribose 1-diphosphate: step 3/9. Its function is as follows. Catalyzes the hydrolysis of the adenine ring of phosphoribosyl-AMP. The polypeptide is Phosphoribosyl-AMP cyclohydrolase (Pseudomonas savastanoi pv. phaseolicola (strain 1448A / Race 6) (Pseudomonas syringae pv. phaseolicola (strain 1448A / Race 6))).